Consider the following 401-residue polypeptide: MSSFIKRFRKSTLVAFNRTVHFLQDDYSVWSYEIDADKESVPFEKGRPRKYFDADSDSDEEQQNGDEPGTGKNNGGGDTGKKDQDDQTNAIVALDVNEDRSLVAVATGDKSLYLFEVDQDGRTLKVLSRRLLSRASSCVKFAAGGRFAIVCDKGGDCYKYDCEEYRKPGRWLLGHMSQVLDVLIDTEEKLIITSDRDEKIRVTCHPDCHNIETFCLGHTEFVSHLEFLGPELLLSLSGDKTLRWWNYTSGKELARKELELPGNKLALQKLAADGTGLLAVLCYKPTAVNVFKLSGTTGCEFVQALNLKSGQVFSTIAFDESGNLLGFVIEESTGAPSLAKYEFDRENFKLAKEAAFIKSFDDSKLPYVDSVSFLFKKKFDNIKDYQERKRKRIEENNKQLG.

Residues 45 to 85 form a disordered region; sequence KGRPRKYFDADSDSDEEQQNGDEPGTGKNNGGGDTGKKDQD. Over residues 54–64 the composition is skewed to acidic residues; it reads ADSDSDEEQQN. WD repeat units lie at residues 86-125, 174-213, and 217-255; these read DQTN…RTLK, GHMS…NIET, and GHTE…ELAR.

Belongs to the WD repeat TRM82 family. As to quaternary structure, forms a heterodimer with the catalytic subunit.

The protein localises to the nucleus. It functions in the pathway tRNA modification; N(7)-methylguanine-tRNA biosynthesis. Its function is as follows. Required for the formation of N(7)-methylguanine at position 46 (m7G46) in tRNA. In the complex, it is required to stabilize and induce conformational changes of the catalytic subunit. This is tRNA (guanine-N(7)-)-methyltransferase non-catalytic subunit wuho from Culex quinquefasciatus (Southern house mosquito).